Reading from the N-terminus, the 325-residue chain is Alpha-cuprenene synthase COP6 (325 aa).

Positions 102, 166, 224, 228, and 232 each coordinate Mg(2+).

It belongs to the trichodiene synthase family. Mg(2+) serves as cofactor.

Functionally, alpha-cuprenene synthase; part of the gene cluster that mediates the biosynthesis of alpha-cuprenene and oxidized derivatives. The alpha-cuprenene synthase COP6 is the only sesquiterpene synthase identified in C.cinereus that appears to be part of a biosynthetic gene cluster and is highly specific since it catalyzes the cyclization of (2E,6E)-farnesyl diphosphate into only one product, alpha-cuprenene. COP6 is also able to perform the cyclization of geranyl diphosphate. The cytochrome P450 monooxygenase COX2 then oxidizes the cyclohexadiene ring of alpha-cuprenene at positions 1 and 4, yielding first alpha-cuparene, followed by alpha-cuparophenol and a further yet unidentified compound resulting from one additional oxidation step. The cytochrome P450 monooxygenase COX1 then likely catalyzes the oxidation at position 9 of the pentane ring of alpha-cuprenene to give the corresponding hydroxy or ketone derivatives. The sequence is that of Alpha-cuprenene synthase COP6 from Coprinopsis cinerea (strain Okayama-7 / 130 / ATCC MYA-4618 / FGSC 9003) (Inky cap fungus).